The chain runs to 448 residues: C4-dicarboxylate transport protein 2 (448 aa).

9 helical membrane-spanning segments follow: residues 13–33 (SLYV…HFSP), 49–69 (LIKM…IAGM), 81–101 (LALL…LIVV), 149–169 (AFAK…GFAL), 193–213 (IVGI…AFTI), 227–247 (LMGA…GIVS), 294–314 (VVGL…SIYL), 335–355 (ITLL…TGSG), and 357–377 (IVLA…LALI).

This sequence belongs to the dicarboxylate/amino acid:cation symporter (DAACS) (TC 2.A.23) family.

Its subcellular location is the cell inner membrane. Responsible for the transport of dicarboxylates such as succinate, fumarate, and malate from the periplasm across the membrane. The polypeptide is C4-dicarboxylate transport protein 2 (Polaromonas naphthalenivorans (strain CJ2)).